We begin with the raw amino-acid sequence, 1200 residues long: DNA polymerase subunit gamma-1 (1200 aa).

2 disordered regions span residues 471–515 and 667–688; these read QKKT…RPSM and MDLS…SSEH. Basic residues predominate over residues 472 to 481; the sequence is KKTKISKKQK. Basic and acidic residues predominate over residues 494 to 512; the sequence is LVEDHNEDPGPPTEKEESR.

This sequence belongs to the DNA polymerase type-A family. Heterotrimer composed of a catalytic subunit and a homodimer of accessory subunits. The cofactor is Mg(2+).

It localises to the mitochondrion. Its subcellular location is the mitochondrion matrix. The protein localises to the mitochondrion nucleoid. The catalysed reaction is DNA(n) + a 2'-deoxyribonucleoside 5'-triphosphate = DNA(n+1) + diphosphate. In terms of biological role, involved in the replication of mitochondrial DNA. Associates with mitochondrial DNA. In Xenopus laevis (African clawed frog), this protein is DNA polymerase subunit gamma-1 (polg).